The chain runs to 238 residues: tRNA1(Val) (adenine(37)-N6)-methyltransferase (238 aa).

This sequence belongs to the methyltransferase superfamily. tRNA (adenine-N(6)-)-methyltransferase family.

The protein localises to the cytoplasm. It carries out the reaction adenosine(37) in tRNA1(Val) + S-adenosyl-L-methionine = N(6)-methyladenosine(37) in tRNA1(Val) + S-adenosyl-L-homocysteine + H(+). Specifically methylates the adenine in position 37 of tRNA(1)(Val) (anticodon cmo5UAC). The polypeptide is tRNA1(Val) (adenine(37)-N6)-methyltransferase (Shewanella baltica (strain OS195)).